The sequence spans 437 residues: Adenylosuccinate synthetase (437 aa).

Residues 13–19 (GDEGKGK) and 41–43 (GHT) each bind GTP. Catalysis depends on Asp14, which acts as the Proton acceptor. Asp14 and Gly41 together coordinate Mg(2+). IMP-binding positions include 14–17 (DEGK), 39–42 (NAGH), Thr130, Arg144, Gln225, Thr240, and Arg310. Catalysis depends on His42, which acts as the Proton donor. 306–312 (ATTGRLR) contributes to the substrate binding site. GTP is bound by residues Arg312, 338–340 (KLD), and 421–423 (STG).

Belongs to the adenylosuccinate synthetase family. Homodimer. Mg(2+) serves as cofactor.

Its subcellular location is the cytoplasm. The catalysed reaction is IMP + L-aspartate + GTP = N(6)-(1,2-dicarboxyethyl)-AMP + GDP + phosphate + 2 H(+). Its pathway is purine metabolism; AMP biosynthesis via de novo pathway; AMP from IMP: step 1/2. Plays an important role in the de novo pathway of purine nucleotide biosynthesis. Catalyzes the first committed step in the biosynthesis of AMP from IMP. The chain is Adenylosuccinate synthetase from Psychromonas ingrahamii (strain DSM 17664 / CCUG 51855 / 37).